We begin with the raw amino-acid sequence, 927 residues long: Nonsense-mediated mRNA decay factor SMG8 (927 aa).

Disordered regions lie at residues 543 to 581, 611 to 636, and 643 to 662; these read NTGK…NTAS, QARS…DTEN, and QEPA…AVST. Residues 551 to 566 are compositionally biased toward acidic residues; that stretch reads QDEDAGEDEAEEEEGQ. The segment covering 613-633 has biased composition (polar residues); it reads RSEQLSNSEQNTTRSGSSSVD. The segment covering 644–654 has biased composition (basic and acidic residues); that stretch reads EPAKKEAREDV.

Belongs to the SMG8 family.

In terms of biological role, involved in nonsense-mediated decay (NMD) of mRNAs containing premature stop codons. Probable component of kinase complex containing nonC and recruited to stalled ribosomes. This Drosophila sechellia (Fruit fly) protein is Nonsense-mediated mRNA decay factor SMG8.